The following is a 499-amino-acid chain: 3-beta-hydroxylase (499 aa).

The helical; Signal-anchor for type II membrane protein transmembrane segment at 2–22 (FSSFETLILSFVSLFFMMIFI) threads the bilayer. Cysteine 441 serves as a coordination point for heme.

The protein belongs to the cytochrome P450 family. It depends on heme as a cofactor.

It localises to the membrane. The enzyme catalyses (+)-costunolide + reduced [NADPH--hemoprotein reductase] + O2 = 3beta-hydroxycostunolide + oxidized [NADPH--hemoprotein reductase] + H2O + H(+). The catalysed reaction is parthenolide + reduced [NADPH--hemoprotein reductase] + O2 = 3beta-hydroxyparthenolide + oxidized [NADPH--hemoprotein reductase] + H2O + H(+). It functions in the pathway secondary metabolite biosynthesis; terpenoid biosynthesis. Functionally, involved in the biosynthesis of germacrene-derived sesquiterpene lactones. Component of the parthenolide biosynthetic pathway; parthenolide and conjugates are promising anti-cancer drugs highly active against colon cancer cells. Catalyzes the conversion of costunolide and parthenolide to 3-beta-hydroxycostunolide and 3-beta-hydroxyparthenolide, respectively. The polypeptide is 3-beta-hydroxylase (Tanacetum parthenium (Feverfew)).